The chain runs to 180 residues: Cytokinin-beta-glucosidase 2 (180 aa).

Functionally, hydrolyzes cytokinin glucosides thus liberating free cytokinins. This Linaria vulgaris (Toadflax) protein is Cytokinin-beta-glucosidase 2 (ROLC2).